We begin with the raw amino-acid sequence, 116 residues long: MTSSNFPKAERLLRRPEFLQFNEGASKLHTQYFLVLLKPNEGTGTRVGFTVSKKVGNAVVRNSIKRRLREFYRQNKSLFISADINIVAKKGADVLDFHQISTELAAAFGRLRKKYA.

Belongs to the RnpA family. Consists of a catalytic RNA component (M1 or rnpB) and a protein subunit.

The enzyme catalyses Endonucleolytic cleavage of RNA, removing 5'-extranucleotides from tRNA precursor.. In terms of biological role, RNaseP catalyzes the removal of the 5'-leader sequence from pre-tRNA to produce the mature 5'-terminus. It can also cleave other RNA substrates such as 4.5S RNA. The protein component plays an auxiliary but essential role in vivo by binding to the 5'-leader sequence and broadening the substrate specificity of the ribozyme. The protein is Ribonuclease P protein component of Citrifermentans bemidjiense (strain ATCC BAA-1014 / DSM 16622 / JCM 12645 / Bem) (Geobacter bemidjiensis).